The following is a 116-amino-acid chain: Large ribosomal subunit protein uL22c (116 aa).

This sequence belongs to the universal ribosomal protein uL22 family. As to quaternary structure, part of the 50S ribosomal subunit.

Its subcellular location is the plastid. The protein resides in the chloroplast. Its function is as follows. This protein binds specifically to 23S rRNA. The globular domain of the protein is located near the polypeptide exit tunnel on the outside of the subunit, while an extended beta-hairpin is found that lines the wall of the exit tunnel in the center of the 70S ribosome. The chain is Large ribosomal subunit protein uL22c (rpl22) from Porphyra purpurea (Red seaweed).